The chain runs to 438 residues: MGNIHTTGPNEALIVSGGCCGSTKKRTIVGGWAWAWWLVTDVQRLSLNVMTLNPMCENVETSQGVPLTVTGVAQCKIMKSSSYKQTDYHNDEADELLGTASEQFLGKSVKEIKQTILQTLEGHLRAILGTLTVEEVYKDRDQFAALVREVAAPDVGRMGIEILSFTIKDVYDDVQYLASLGKAQTAVVKRDADAGVAEANRDAGIREAECEKSAMDVKYSTDTKIEDNTRMYKLQKANFDQEINTAKAESQLAYELQAAKIRQRIRNEEIQIEVVERRKQIEIESQEVQRKDRELTGTVKLPAEAEAFRLQTLAQAKQCQTIEGARAEAERIRKIGSAEAHAIELVGKAEAERMRMKAHVYKQYGDAAIMNIVLESLPKIAAEVAAPLAKTDEIVLIGGNDNITNDVTRLVAQLPPSINALTGVDLSKVLSKIPGAKA.

Belongs to the band 7/mec-2 family. Flotillin subfamily. As to quaternary structure, heterooligomeric complex of flotillins 1 and 2.

The protein localises to the membrane. In terms of biological role, may play a role in axon growth and regeneration. May be involved in epidermal cell adhesion and epidermal structure and function. This is Flotillin-2 from Drosophila melanogaster (Fruit fly).